The primary structure comprises 371 residues: Cytochrome b (371 aa).

A run of 4 helical transmembrane segments spans residues 25 to 45, 69 to 90, 105 to 125, and 170 to 190; these read FGSM…FLAV, WMMQ…YTHI, WLSG…GYVL, and FFAL…LHIM. Heme b is bound by residues His75 and His89. Positions 174 and 188 each coordinate heme b. Position 193 (His193) interacts with a ubiquinone. The next 4 membrane-spanning stretches (helical) occupy residues 218–238, 280–300, 312–332, and 339–358; these read YKDM…VAFF, LGGA…PFTH, IMQL…WAAT, and FTTI…ITNP.

It belongs to the cytochrome b family. The cytochrome bc1 complex contains 3 respiratory subunits (MT-CYB, CYC1 and UQCRFS1), 2 core proteins (UQCRC1 and UQCRC2) and probably 6 low-molecular weight proteins. Heme b is required as a cofactor.

The protein resides in the mitochondrion inner membrane. Functionally, component of the ubiquinol-cytochrome c reductase complex (complex III or cytochrome b-c1 complex) that is part of the mitochondrial respiratory chain. The b-c1 complex mediates electron transfer from ubiquinol to cytochrome c. Contributes to the generation of a proton gradient across the mitochondrial membrane that is then used for ATP synthesis. This chain is Cytochrome b (MT-CYB), found in Eryx colubrinus colubrinus.